The chain runs to 196 residues: Rac-like GTP-binding protein RAC9 (196 aa).

Residue 13 to 20 (GDGAVGKT) participates in GTP binding. Positions 35–43 (YVPTVFDNF) match the Effector region motif. Residues 60-64 (DTAGQ) and 118-121 (TKLD) contribute to the GTP site. C193 carries the cysteine methyl ester modification. Residue C193 is the site of S-geranylgeranyl cysteine attachment. Positions 194–196 (AFL) are cleaved as a propeptide — removed in mature form.

Belongs to the small GTPase superfamily. Rho family.

It localises to the cytoplasm. Its subcellular location is the membrane. Inactive GDP-bound Rho GTPases reside in the cytosol, are found in a complex with Rho GDP-dissociation inhibitors (Rho GDIs), and are released from the GDI protein in order to translocate to membranes upon activation. In Gossypium hirsutum (Upland cotton), this protein is Rac-like GTP-binding protein RAC9 (RAC9).